The following is a 567-amino-acid chain: Oxygen-dependent choline dehydrogenase (567 aa).

An FAD-binding site is contributed by 4-33; that stretch reads DYIIIGAGSAGNVLAARLTEDADVTVLLLE. Residue His473 is the Proton acceptor of the active site.

The protein belongs to the GMC oxidoreductase family. Requires FAD as cofactor.

It carries out the reaction choline + A = betaine aldehyde + AH2. The catalysed reaction is betaine aldehyde + NAD(+) + H2O = glycine betaine + NADH + 2 H(+). The protein operates within amine and polyamine biosynthesis; betaine biosynthesis via choline pathway; betaine aldehyde from choline (cytochrome c reductase route): step 1/1. In terms of biological role, involved in the biosynthesis of the osmoprotectant glycine betaine. Catalyzes the oxidation of choline to betaine aldehyde and betaine aldehyde to glycine betaine at the same rate. This chain is Oxygen-dependent choline dehydrogenase, found in Yersinia pestis bv. Antiqua (strain Antiqua).